Reading from the N-terminus, the 184-residue chain is MVRYSLDPENPTKSCKSRGSNLRVHFKNTRETAQAIKGMHIRKATKYLKDVTLKKQCVPFRRYNGGVGRCAQAKQWGWTQGRWPKKSAEFLLHMLKNAESNAELKGLDVDSLVIEHIQVNKAPKMRRRTYRAHGRINPYMSSPCHIEMILTEKEQIVPKPEEEVAQKKKISQKKLKKQKLMARE.

The tract at residues 160-184 is disordered; sequence PEEEVAQKKKISQKKLKKQKLMARE. The span at 167–184 shows a compositional bias: basic residues; the sequence is KKKISQKKLKKQKLMARE.

Belongs to the universal ribosomal protein uL22 family. As to quaternary structure, component of the large ribosomal subunit.

The protein resides in the cytoplasm. In terms of biological role, component of the large ribosomal subunit. The ribosome is a large ribonucleoprotein complex responsible for the synthesis of proteins in the cell. The sequence is that of Large ribosomal subunit protein uL22 (RPL17) from Bos taurus (Bovine).